The sequence spans 458 residues: UPF0210 protein MMP1427 (458 aa).

Belongs to the UPF0210 family.

The sequence is that of UPF0210 protein MMP1427 from Methanococcus maripaludis (strain DSM 14266 / JCM 13030 / NBRC 101832 / S2 / LL).